A 760-amino-acid polypeptide reads, in one-letter code: Catalase-peroxidase (760 aa).

The signal sequence occupies residues 1–45 (MKGTPFRSPHLYQEGSSCMHRTIRSVAAVLTVVLSATIPMVPAWS). The segment at residues 124-245 (WHGAGTYRTY…LAATQMGLIY (122 aa)) is a cross-link (tryptophyl-tyrosyl-methioninium (Trp-Tyr) (with M-271)). The Proton acceptor role is filled by histidine 125. Positions 245 to 271 (YVNPEGPNGVPDPVAAARDIREAFGGM) form a cross-link, tryptophyl-tyrosyl-methioninium (Tyr-Met) (with W-124). Histidine 286 provides a ligand contact to heme b.

It belongs to the peroxidase family. Peroxidase/catalase subfamily. As to quaternary structure, homodimer or homotetramer. The cofactor is heme b. Formation of the three residue Trp-Tyr-Met cross-link is important for the catalase, but not the peroxidase activity of the enzyme.

The enzyme catalyses H2O2 + AH2 = A + 2 H2O. It catalyses the reaction 2 H2O2 = O2 + 2 H2O. Bifunctional enzyme with both catalase and broad-spectrum peroxidase activity. The sequence is that of Catalase-peroxidase from Granulibacter bethesdensis (strain ATCC BAA-1260 / CGDNIH1).